The chain runs to 592 residues: Aspartate--tRNA(Asp/Asn) ligase (592 aa).

L-aspartate is bound at residue Glu182. The tract at residues 206-209 (QIFK) is aspartate. Position 228 (Arg228) interacts with L-aspartate. Residues 228 to 230 (RDE) and Gln237 each bind ATP. His455 serves as a coordination point for L-aspartate. Residue Glu489 coordinates ATP. Arg496 is a binding site for L-aspartate. 541–544 (GLDR) contacts ATP.

Belongs to the class-II aminoacyl-tRNA synthetase family. Type 1 subfamily. In terms of assembly, homodimer.

The protein localises to the cytoplasm. It carries out the reaction tRNA(Asx) + L-aspartate + ATP = L-aspartyl-tRNA(Asx) + AMP + diphosphate. Its function is as follows. Aspartyl-tRNA synthetase with relaxed tRNA specificity since it is able to aspartylate not only its cognate tRNA(Asp) but also tRNA(Asn). Reaction proceeds in two steps: L-aspartate is first activated by ATP to form Asp-AMP and then transferred to the acceptor end of tRNA(Asp/Asn). The protein is Aspartate--tRNA(Asp/Asn) ligase of Caldanaerobacter subterraneus subsp. tengcongensis (strain DSM 15242 / JCM 11007 / NBRC 100824 / MB4) (Thermoanaerobacter tengcongensis).